A 343-amino-acid polypeptide reads, in one-letter code: Holliday junction branch migration complex subunit RuvB (343 aa).

The interval 1–186 (MVMARKSDTL…FQIQERLEYY (186 aa)) is large ATPase domain (RuvB-L). Residues Leu-25, Arg-26, Gly-67, Lys-70, Thr-71, Ser-72, 133-135 (EDF), Arg-176, Tyr-186, and Arg-223 each bind ATP. Thr-71 is a binding site for Mg(2+). The small ATPAse domain (RuvB-S) stretch occupies residues 187-257 (DAKALESILH…LAQKSLDRLG (71 aa)). Positions 260–343 (ASGLDSMDRK…PPPTPQGSLF (84 aa)) are head domain (RuvB-H). Residues Arg-296, Arg-315, and Arg-320 each coordinate DNA.

It belongs to the RuvB family. As to quaternary structure, homohexamer. Forms an RuvA(8)-RuvB(12)-Holliday junction (HJ) complex. HJ DNA is sandwiched between 2 RuvA tetramers; dsDNA enters through RuvA and exits via RuvB. An RuvB hexamer assembles on each DNA strand where it exits the tetramer. Each RuvB hexamer is contacted by two RuvA subunits (via domain III) on 2 adjacent RuvB subunits; this complex drives branch migration. In the full resolvosome a probable DNA-RuvA(4)-RuvB(12)-RuvC(2) complex forms which resolves the HJ.

It localises to the cytoplasm. It catalyses the reaction ATP + H2O = ADP + phosphate + H(+). Its function is as follows. The RuvA-RuvB-RuvC complex processes Holliday junction (HJ) DNA during genetic recombination and DNA repair, while the RuvA-RuvB complex plays an important role in the rescue of blocked DNA replication forks via replication fork reversal (RFR). RuvA specifically binds to HJ cruciform DNA, conferring on it an open structure. The RuvB hexamer acts as an ATP-dependent pump, pulling dsDNA into and through the RuvAB complex. RuvB forms 2 homohexamers on either side of HJ DNA bound by 1 or 2 RuvA tetramers; 4 subunits per hexamer contact DNA at a time. Coordinated motions by a converter formed by DNA-disengaged RuvB subunits stimulates ATP hydrolysis and nucleotide exchange. Immobilization of the converter enables RuvB to convert the ATP-contained energy into a lever motion, pulling 2 nucleotides of DNA out of the RuvA tetramer per ATP hydrolyzed, thus driving DNA branch migration. The RuvB motors rotate together with the DNA substrate, which together with the progressing nucleotide cycle form the mechanistic basis for DNA recombination by continuous HJ branch migration. Branch migration allows RuvC to scan DNA until it finds its consensus sequence, where it cleaves and resolves cruciform DNA. This is Holliday junction branch migration complex subunit RuvB from Myxococcus xanthus (strain DK1622).